The sequence spans 301 residues: Acetylglutamate kinase (301 aa).

Substrate contacts are provided by residues 68 to 69, Arg90, and Asn195; that span reads GG.

It belongs to the acetylglutamate kinase family. ArgB subfamily.

Its subcellular location is the cytoplasm. The catalysed reaction is N-acetyl-L-glutamate + ATP = N-acetyl-L-glutamyl 5-phosphate + ADP. The protein operates within amino-acid biosynthesis; L-arginine biosynthesis; N(2)-acetyl-L-ornithine from L-glutamate: step 2/4. Catalyzes the ATP-dependent phosphorylation of N-acetyl-L-glutamate. The protein is Acetylglutamate kinase of Pseudomonas aeruginosa (strain LESB58).